A 395-amino-acid chain; its full sequence is Probable alcohol dehydrogenase EutG (395 aa).

NAD(+)-binding positions include Asp-57, Gly-116–Asp-120, Thr-156–Thr-160, Lys-178, and Val-197–Val-201. Asp-212, His-216, His-281, and His-295 together coordinate Fe cation. NAD(+) contacts are provided by His-295 and Asp-354.

It belongs to the iron-containing alcohol dehydrogenase family. Fe cation serves as cofactor.

It is found in the bacterial microcompartment. The enzyme catalyses ethanol + NAD(+) = acetaldehyde + NADH + H(+). It functions in the pathway amine and polyamine degradation; ethanolamine degradation. Functionally, probably acts on the acetaldehyde produced by the degradation of ethanolamine, producing ethanol. In terms of biological role, expression of the eut operon allows this bacteria to use ethanolamine (EA) as a carbon, nitrogen and energy source. It relies on cobalamin (vitamin B12) both as a cofactor for the ethanolamine ammonia-lyase (EAL) activity and to induce the operon. EA enhances bacterial survival in macrophages in a concentration-dependent manner, suggesting it is an important nutrient during infection. This chain is Probable alcohol dehydrogenase EutG, found in Salmonella typhimurium (strain LT2 / SGSC1412 / ATCC 700720).